The sequence spans 688 residues: MSKDFLLEIGLEEMPAQYVTSSVLQLEKRVTDWLTENKIEFGEIKTYSTPRRLTVLVEGMAEEQANRVEEAKGPAKKIALDEEGNWSKAALGFAKSQKVDPADLTFRDIKGVEYIYIKKEVIGEKTSTLLPSLEKVVTSMTFPVSMHWGSNDLRYIRPIKWLIAMFDEEIIPFEITGVTTSNTSRGHRFLGKSATIKQPSDYPNALLEQFVVVNAEERKQAIVEQLRELESMENWQIKEDDDLLEEVTNLVEYPTVLSGNFEKEYLELPEEVLITTMKEHQRYFPVFSQAGELLPHFVTVRNGNHENLDTVARGNEKVLRARLSDADFFYQEDLKMTIDEAVAKLQNIVFHEKLGTLTEKMKRVQKVALMLADYLDWQEEDKQDIIRLTNIYKFDLVTNIVGEFPELQGLMGEKYALLQGEKPAIATAIREHYLPNSAEGELPQTDLGSLIAIADKLETLIGFFCVNIVPTGSADPFGLRRSAFGAMRIIQANGWNIPMLEVISRIVDMERAEGSTELPDADVKKEVQTFLKNRLRVILQGHHIRHDIIDAVIGGDPNVIPQLIDRAQILNEHAEAEWFRPTIEALSRVVKIAKKYEDGVEVDPALFENEYEQALFDKLEKLKFDYAGLTIIERLKAFADLRTTIDAYFDNTLVMSDNDELKNNRLALLFELASFIKEFAQMDEINVK.

The protein belongs to the class-II aminoacyl-tRNA synthetase family. In terms of assembly, tetramer of two alpha and two beta subunits.

The protein localises to the cytoplasm. The catalysed reaction is tRNA(Gly) + glycine + ATP = glycyl-tRNA(Gly) + AMP + diphosphate. The chain is Glycine--tRNA ligase beta subunit from Listeria monocytogenes serovar 1/2a (strain ATCC BAA-679 / EGD-e).